A 258-amino-acid polypeptide reads, in one-letter code: Imidazole glycerol phosphate synthase subunit HisF (258 aa).

Active-site residues include D11 and D130.

It belongs to the HisA/HisF family. Heterodimer of HisH and HisF.

The protein resides in the cytoplasm. It catalyses the reaction 5-[(5-phospho-1-deoxy-D-ribulos-1-ylimino)methylamino]-1-(5-phospho-beta-D-ribosyl)imidazole-4-carboxamide + L-glutamine = D-erythro-1-(imidazol-4-yl)glycerol 3-phosphate + 5-amino-1-(5-phospho-beta-D-ribosyl)imidazole-4-carboxamide + L-glutamate + H(+). It functions in the pathway amino-acid biosynthesis; L-histidine biosynthesis; L-histidine from 5-phospho-alpha-D-ribose 1-diphosphate: step 5/9. IGPS catalyzes the conversion of PRFAR and glutamine to IGP, AICAR and glutamate. The HisF subunit catalyzes the cyclization activity that produces IGP and AICAR from PRFAR using the ammonia provided by the HisH subunit. This chain is Imidazole glycerol phosphate synthase subunit HisF, found in Roseiflexus sp. (strain RS-1).